The sequence spans 205 residues: Outer-membrane lipoprotein LolB (205 aa).

Residues 1–17 form the signal peptide; sequence MFLRHVIVFSFIALLAG. Cysteine 18 carries the N-palmitoyl cysteine lipid modification. A lipid anchor (S-diacylglycerol cysteine) is attached at cysteine 18.

This sequence belongs to the LolB family. Monomer.

Its subcellular location is the cell outer membrane. Functionally, plays a critical role in the incorporation of lipoproteins in the outer membrane after they are released by the LolA protein. This is Outer-membrane lipoprotein LolB from Pseudomonas fluorescens (strain Pf0-1).